The following is a 293-amino-acid chain: Acetyl-coenzyme A carboxylase carboxyl transferase subunit beta (293 aa).

One can recognise a CoA carboxyltransferase N-terminal domain in the interval 29–293 (LWSKCPECGL…GCRPMEITSA (265 aa)). Cys-33, Cys-36, Cys-52, and Cys-55 together coordinate Zn(2+). A C4-type zinc finger spans residues 33-55 (CPECGLVVYVKDLKGNASVCAGC).

It belongs to the AccD/PCCB family. Acetyl-CoA carboxylase is a heterohexamer composed of biotin carboxyl carrier protein (AccB), biotin carboxylase (AccC) and two subunits each of ACCase subunit alpha (AccA) and ACCase subunit beta (AccD). It depends on Zn(2+) as a cofactor.

The protein resides in the cytoplasm. It carries out the reaction N(6)-carboxybiotinyl-L-lysyl-[protein] + acetyl-CoA = N(6)-biotinyl-L-lysyl-[protein] + malonyl-CoA. The protein operates within lipid metabolism; malonyl-CoA biosynthesis; malonyl-CoA from acetyl-CoA: step 1/1. Functionally, component of the acetyl coenzyme A carboxylase (ACC) complex. Biotin carboxylase (BC) catalyzes the carboxylation of biotin on its carrier protein (BCCP) and then the CO(2) group is transferred by the transcarboxylase to acetyl-CoA to form malonyl-CoA. This Parasynechococcus marenigrum (strain WH8102) protein is Acetyl-coenzyme A carboxylase carboxyl transferase subunit beta.